A 417-amino-acid polypeptide reads, in one-letter code: Spermidine/putrescine import ATP-binding protein PotA (417 aa).

Positions 5–308 (IILKDLTKVF…PANRFVAQFV (304 aa)) constitute an ABC transporter domain. Residue 37–44 (GPSGCGKT) participates in ATP binding. The interval 105 to 177 (DFNSKIKDNL…TALKCKKINK (73 aa)) is insert.

It belongs to the ABC transporter superfamily. Spermidine/putrescine importer (TC 3.A.1.11.1) family. The complex is composed of two ATP-binding proteins (PotA), two transmembrane proteins (PotB and PotC) and a solute-binding protein (PotD).

The protein localises to the cell membrane. The enzyme catalyses ATP + H2O + polyamine-[polyamine-binding protein]Side 1 = ADP + phosphate + polyamineSide 2 + [polyamine-binding protein]Side 1.. Its function is as follows. Part of the ABC transporter complex PotABCD involved in spermidine/putrescine import. Responsible for energy coupling to the transport system. The protein is Spermidine/putrescine import ATP-binding protein PotA of Aster yellows witches'-broom phytoplasma (strain AYWB).